Consider the following 110-residue polypeptide: Phosphoribosyl-AMP cyclohydrolase (110 aa).

D74 provides a ligand contact to Mg(2+). C75 is a Zn(2+) binding site. Positions 76 and 78 each coordinate Mg(2+). Zn(2+)-binding residues include C91 and C98.

Belongs to the PRA-CH family. In terms of assembly, homodimer. Mg(2+) is required as a cofactor. The cofactor is Zn(2+).

Its subcellular location is the cytoplasm. It carries out the reaction 1-(5-phospho-beta-D-ribosyl)-5'-AMP + H2O = 1-(5-phospho-beta-D-ribosyl)-5-[(5-phospho-beta-D-ribosylamino)methylideneamino]imidazole-4-carboxamide. It participates in amino-acid biosynthesis; L-histidine biosynthesis; L-histidine from 5-phospho-alpha-D-ribose 1-diphosphate: step 3/9. Catalyzes the hydrolysis of the adenine ring of phosphoribosyl-AMP. This chain is Phosphoribosyl-AMP cyclohydrolase, found in Lacticaseibacillus paracasei (strain ATCC 334 / BCRC 17002 / CCUG 31169 / CIP 107868 / KCTC 3260 / NRRL B-441) (Lactobacillus paracasei).